The following is a 150-amino-acid chain: 3-hydroxyacyl-[acyl-carrier-protein] dehydratase FabZ (150 aa).

Residue His54 is part of the active site.

Belongs to the thioester dehydratase family. FabZ subfamily.

It is found in the cytoplasm. It catalyses the reaction a (3R)-hydroxyacyl-[ACP] = a (2E)-enoyl-[ACP] + H2O. Functionally, involved in unsaturated fatty acids biosynthesis. Catalyzes the dehydration of short chain beta-hydroxyacyl-ACPs and long chain saturated and unsaturated beta-hydroxyacyl-ACPs. In Vibrio campbellii (strain ATCC BAA-1116), this protein is 3-hydroxyacyl-[acyl-carrier-protein] dehydratase FabZ.